Reading from the N-terminus, the 386-residue chain is Mannitol-1-phosphate 5-dehydrogenase (386 aa).

Residue alanine 6 to glycine 17 participates in NAD(+) binding. Residue lysine 214 is part of the active site.

Belongs to the mannitol dehydrogenase family. Monomer.

It catalyses the reaction D-mannitol 1-phosphate + NAD(+) = beta-D-fructose 6-phosphate + NADH + H(+). In terms of biological role, catalyzes the NAD(H)-dependent interconversion of D-fructose 6-phosphate and D-mannitol 1-phosphate in the mannitol metabolic pathway. Plays a key role in liamocins biosynthesis by providing the mannitol moity that is linked to 3,5-dihydroxydecanoic acid (provided by the HR-PKS PKS1) via ester bond formation catalyzed by the esterase EST1. The sequence is that of Mannitol-1-phosphate 5-dehydrogenase from Aureobasidium melanogenum (Aureobasidium pullulans var. melanogenum).